The chain runs to 320 residues: Cytochrome f (320 aa).

The N-terminal stretch at 1–35 (MQNRNTFSWVKEQMTRSIFVSMMIYIITRASISNA) is a signal peptide. Heme-binding residues include Y36, C56, C59, and H60. A helical transmembrane segment spans residues 286–306 (IQGLFLFLASVILAQIFLVLK).

It belongs to the cytochrome f family. As to quaternary structure, the 4 large subunits of the cytochrome b6-f complex are cytochrome b6, subunit IV (17 kDa polypeptide, petD), cytochrome f and the Rieske protein, while the 4 small subunits are PetG, PetL, PetM and PetN. The complex functions as a dimer. It depends on heme as a cofactor.

Its subcellular location is the plastid. It is found in the chloroplast thylakoid membrane. Component of the cytochrome b6-f complex, which mediates electron transfer between photosystem II (PSII) and photosystem I (PSI), cyclic electron flow around PSI, and state transitions. The protein is Cytochrome f of Amborella trichopoda.